Here is a 423-residue protein sequence, read N- to C-terminus: Protein CLP1 homolog (423 aa).

Residues E16, K57, and 119–124 contribute to the ATP site; that span reads DVGKST.

It belongs to the Clp1 family. Clp1 subfamily.

The protein localises to the nucleus. Required for endonucleolytic cleavage during polyadenylation-dependent pre-mRNA 3'-end formation. This chain is Protein CLP1 homolog (cbc), found in Drosophila simulans (Fruit fly).